Consider the following 287-residue polypeptide: Mu-like prophage FluMu DNA transposition protein B (287 aa).

An HTH cro/C1-type domain is found at 7–62 (LKQHLSDSQITQAQLAREAGVNAGALSAYLNDNYKGNIADVEAKLAAYLEKKAVQA). A DNA-binding region (H-T-H motif) is located at residues 18 to 37 (QAQLAREAGVNAGALSAYLN). Residue 98-105 (GMSGVGKT) participates in ATP binding.

In terms of biological role, this protein is a non-specific DNA-binding and ATP-hydrolyzing protein essential for bacteriophage integration and replication. The sequence is that of Mu-like prophage FluMu DNA transposition protein B from Haemophilus influenzae (strain ATCC 51907 / DSM 11121 / KW20 / Rd).